The primary structure comprises 2559 residues: Ubiquitin carboxyl-terminal hydrolase 9X (2559 aa).

Positions 1 to 44 (MTATTRGSPVGGNDNQGQAPDGQSQPPLQQNQTSSPDSSNENSP) are enriched in polar residues. Residues 1 to 64 (MTATTRGSPV…DAPPQIEDEE (64 aa)) are disordered. A phosphoserine mark is found at serine 374, serine 375, and serine 588. The disordered stretch occupies residues 967–999 (QISSNMPSSPDSSSDSSTGSPGNHGNHYSDGPN). Over residues 969 to 989 (SSNMPSSPDSSSDSSTGSPGN) the composition is skewed to low complexity. Residues 1557 to 1956 (VGLKNAGATC…NAYILFYERM (400 aa)) form the USP domain. Catalysis depends on cysteine 1566, which acts as the Nucleophile. The disordered stretch occupies residues 1592–1633 (GSDVDDDMSGDEKQDNESNVDPRDDVFGYPQQFEDKPPLSKT). Position 1600 is a phosphoserine (serine 1600). 2 stretches are compositionally biased toward basic and acidic residues: residues 1601–1617 (GDEKQDNESNVDPRDDV) and 1624–1633 (FEDKPPLSKT). 4 residues coordinate Zn(2+): cysteine 1727, histidine 1729, cysteine 1771, and cysteine 1774. Histidine 1879 acts as the Proton acceptor in catalysis. Serine 2443 carries the phosphoserine modification. Positions 2475-2484 (PEEEPDDQDA) are enriched in acidic residues. Residues 2475 to 2559 (PEEEPDDQDA…QTKGSVKCTY (85 aa)) are disordered. 2 stretches are compositionally biased toward polar residues: residues 2503 to 2513 (PGSQYQQNNHV) and 2527 to 2537 (NNPQRTGQRAQ). A Phosphotyrosine modification is found at tyrosine 2540. The residue at position 2547 (serine 2547) is a Phosphoserine. A Phosphothreonine modification is found at threonine 2551.

The protein belongs to the peptidase C19 family. As to quaternary structure, interacts with SMAD4, MARK4, NUAK1 and BIRC5/survivin. Interacts with DCX. Interacts with OTUD4 and USP7; the interaction is direct. Highest levels in liver and brain with expression also detected in heart, muscle, spleen and kidney (at protein leve). Ubiquitously expressed in adult tissues.

The protein localises to the cytoplasm. It is found in the cytosol. The protein resides in the cell projection. Its subcellular location is the growth cone. It localises to the cytoskeleton. The protein localises to the cilium axoneme. The catalysed reaction is Thiol-dependent hydrolysis of ester, thioester, amide, peptide and isopeptide bonds formed by the C-terminal Gly of ubiquitin (a 76-residue protein attached to proteins as an intracellular targeting signal).. Functionally, deubiquitinase involved both in the processing of ubiquitin precursors and of ubiquitinated proteins. May therefore play an important regulatory role at the level of protein turnover by preventing degradation of proteins through the removal of conjugated ubiquitin. Specifically hydrolyzes 'Lys-11'-, followed by 'Lys-63'-, 'Lys-48'- and 'Lys-6'-linked polyubiquitins chains. Essential component of TGF-beta/BMP signaling cascade. Specifically deubiquitinates monoubiquitinated SMAD4, opposing the activity of E3 ubiquitin-protein ligase TRIM33. Deubiquitinates alkylation repair enzyme ALKBH3. OTUD4 recruits USP7 and USP9X to stabilize ALKBH3, thereby promoting the repair of alkylated DNA lesions. Deubiquitinates RNA demethylase enzyme ALKBH5, promoting its stability. Deubiquitinates mTORC2 complex component RICTOR at 'Lys-294' by removing 'Lys-63'-linked polyubiquitin chains, stabilizing RICTOR and enhancing its binding to MTOR, thus promoting mTORC2 complex assembly. Regulates chromosome alignment and segregation in mitosis by regulating the localization of BIRC5/survivin to mitotic centromeres. Involved in axonal growth and neuronal cell migration. Regulates cellular clock function by enhancing the protein stability and transcriptional activity of the core circadian protein BMAL1 via its deubiquitinating activity. Acts as a regulator of peroxisome import by mediating deubiquitination of PEX5: specifically deubiquitinates PEX5 monoubiquitinated at 'Cys-11' following its retrotranslocation into the cytosol, resetting PEX5 for a subsequent import cycle. Deubiquitinates PEG10. Inhibits the activation of the Hippo signaling pathway via deubiquitination of AMOTL2 at 'Lys-337' and 'Lys-404' which prohibits its interaction with and activation of LATS2. Loss of LATS2 activation and subsequent loss of YAP1 phosphorylation results in an increase in YAP1-driven transcription of target genes. The polypeptide is Ubiquitin carboxyl-terminal hydrolase 9X (Mus musculus (Mouse)).